A 207-amino-acid chain; its full sequence is Protein MK0488 (207 aa).

The AMMECR1 domain occupies 8–200; that stretch reads EEGEFLVRLA…EEEPEGPVRE (193 aa).

This chain is Protein MK0488, found in Methanopyrus kandleri (strain AV19 / DSM 6324 / JCM 9639 / NBRC 100938).